Consider the following 143-residue polypeptide: Transcriptional regulator MraZ (143 aa).

SpoVT-AbrB domains follow at residues E5 to E47 and A76 to L119.

The protein belongs to the MraZ family. As to quaternary structure, forms oligomers.

The protein resides in the cytoplasm. Its subcellular location is the nucleoid. This Carboxydothermus hydrogenoformans (strain ATCC BAA-161 / DSM 6008 / Z-2901) protein is Transcriptional regulator MraZ.